The primary structure comprises 401 residues: MAGATVTVEEVRKAQRATGPATVLAIGTATPANCVHQADYPDYYFRITKSEHMTELKEKFKRMCDKSQIRKRYMHLTEEYLAENPNMCAYMAPSLDARQDIVVVEVPKLGKAAAQKAIKEWGQPKSKITHLVFCTTSGVDMPGADYQLTKMLGLRPSVNRLMMYQQGCFAGGTVLRVAKDLAENNRGARVLVVCSEITAVTFRGPSESHLDSMVGQALFGDGAAAVIVGADPDERVERPLFQLVSASQTILPDSEGAIDGHLREVGLTFHLLKDVPGLISKNIERSLEEAFKPLGITDYNSIFWVAHPGGPAILDQVEAKVGLKKERMRATRHVLSEYGNMSSACVLFILDEMRKRSAEDGQATTGEGFDWGVLFGFGPGLTVETVVLHSVPITTGATITA.

C168 is a catalytic residue.

It belongs to the thiolase-like superfamily. Chalcone/stilbene synthases family.

The enzyme catalyses (E)-4-coumaroyl-CoA + 3 malonyl-CoA + 3 H(+) = 2',4,4',6'-tetrahydroxychalcone + 3 CO2 + 4 CoA. It functions in the pathway secondary metabolite biosynthesis; flavonoid biosynthesis. Functionally, the primary product of this enzyme is 4,2',4',6'-tetrahydroxychalcone (also termed naringenin-chalcone or chalcone) which can under specific conditions spontaneously isomerize into naringenin. The polypeptide is Chalcone synthase 6 (CHS6) (Sorghum bicolor (Sorghum)).